We begin with the raw amino-acid sequence, 157 residues long: Ribosome maturation factor RimP (157 aa).

Belongs to the RimP family.

It is found in the cytoplasm. Its function is as follows. Required for maturation of 30S ribosomal subunits. This Enterococcus faecalis (strain ATCC 700802 / V583) protein is Ribosome maturation factor RimP.